An 88-amino-acid polypeptide reads, in one-letter code: MANSAQARKRARQAVVARAHNGSLRSRLRTAIKAVQKAVVGGDKAAAQATFRTSMSTIDSIADKKIIHKNKAARHKSRLSAAIKAMTA.

Belongs to the bacterial ribosomal protein bS20 family.

Binds directly to 16S ribosomal RNA. This Aromatoleum aromaticum (strain DSM 19018 / LMG 30748 / EbN1) (Azoarcus sp. (strain EbN1)) protein is Small ribosomal subunit protein bS20.